The primary structure comprises 177 residues: NADH-quinone oxidoreductase subunit B (177 aa).

4 residues coordinate [4Fe-4S] cluster: Cys56, Cys57, Cys121, and Cys151.

The protein belongs to the complex I 20 kDa subunit family. As to quaternary structure, NDH-1 is composed of 14 different subunits. Subunits NuoB, C, D, E, F, and G constitute the peripheral sector of the complex. Requires [4Fe-4S] cluster as cofactor.

The protein resides in the cell inner membrane. It catalyses the reaction a quinone + NADH + 5 H(+)(in) = a quinol + NAD(+) + 4 H(+)(out). Its function is as follows. NDH-1 shuttles electrons from NADH, via FMN and iron-sulfur (Fe-S) centers, to quinones in the respiratory chain. The immediate electron acceptor for the enzyme in this species is believed to be ubiquinone. Couples the redox reaction to proton translocation (for every two electrons transferred, four hydrogen ions are translocated across the cytoplasmic membrane), and thus conserves the redox energy in a proton gradient. The sequence is that of NADH-quinone oxidoreductase subunit B from Rhodobacter capsulatus (Rhodopseudomonas capsulata).